An 84-amino-acid polypeptide reads, in one-letter code: Mitochondrial import inner membrane translocase subunit Tim9 (84 aa).

Residues 28–52 carry the Twin CX3C motif motif; sequence CFMDCVKDFTTREVKPEETTCSESC. 2 disulfide bridges follow: Cys28–Cys52 and Cys32–Cys48.

This sequence belongs to the small Tim family. Heterohexamer; composed of 3 copies of TIMM9 and 3 copies of TIMM10/TIM10A, named soluble 70 kDa complex. The complex forms a 6-bladed alpha-propeller structure and associates with the TIMM22 component of the TIM22 complex. Interacts with multi-pass transmembrane proteins in transit.

The protein localises to the mitochondrion inner membrane. Mitochondrial intermembrane chaperone that participates in the import and insertion of multi-pass transmembrane proteins into the mitochondrial inner membrane. May also be required for the transfer of beta-barrel precursors from the TOM complex to the sorting and assembly machinery (SAM complex) of the outer membrane. Acts as a chaperone-like protein that protects the hydrophobic precursors from aggregation and guide them through the mitochondrial intermembrane space. This is Mitochondrial import inner membrane translocase subunit Tim9 (timm9) from Danio rerio (Zebrafish).